Reading from the N-terminus, the 168-residue chain is Large ribosomal subunit protein uL11 (168 aa).

Belongs to the universal ribosomal protein uL11 family. As to quaternary structure, part of the ribosomal stalk of the 50S ribosomal subunit. Interacts with L10 and the large rRNA to form the base of the stalk. L10 forms an elongated spine to which L12 dimers bind in a sequential fashion forming a multimeric L10(L12)X complex.

In terms of biological role, forms part of the ribosomal stalk which helps the ribosome interact with GTP-bound translation factors. This is Large ribosomal subunit protein uL11 from Metallosphaera sedula (strain ATCC 51363 / DSM 5348 / JCM 9185 / NBRC 15509 / TH2).